Consider the following 391-residue polypeptide: S-adenosylmethionine synthase (391 aa).

Histidine 14 contacts ATP. Aspartate 16 lines the Mg(2+) pocket. Glutamate 42 contacts K(+). Glutamate 55 and glutamine 98 together coordinate L-methionine. Residues 98–108 (QSVDIAMGVDE) are flexible loop. ATP is bound by residues 172–174 (DGK), 238–239 (RF), aspartate 247, 253–254 (RK), alanine 270, and lysine 274. Aspartate 247 lines the L-methionine pocket. Lysine 278 serves as a coordination point for L-methionine.

This sequence belongs to the AdoMet synthase family. In terms of assembly, homotetramer; dimer of dimers. It depends on Mg(2+) as a cofactor. K(+) serves as cofactor.

Its subcellular location is the cytoplasm. The enzyme catalyses L-methionine + ATP + H2O = S-adenosyl-L-methionine + phosphate + diphosphate. Its pathway is amino-acid biosynthesis; S-adenosyl-L-methionine biosynthesis; S-adenosyl-L-methionine from L-methionine: step 1/1. Catalyzes the formation of S-adenosylmethionine (AdoMet) from methionine and ATP. The overall synthetic reaction is composed of two sequential steps, AdoMet formation and the subsequent tripolyphosphate hydrolysis which occurs prior to release of AdoMet from the enzyme. This is S-adenosylmethionine synthase from Clostridium botulinum (strain Kyoto / Type A2).